The primary structure comprises 196 residues: Small ribosomal subunit protein uS4c (196 aa).

An S4 RNA-binding domain is found at 89–169 (MRLDNIIFRL…LPKHLTIDTV (81 aa)).

The protein belongs to the universal ribosomal protein uS4 family. Part of the 30S ribosomal subunit. Contacts protein S5. The interaction surface between S4 and S5 is involved in control of translational fidelity.

Its subcellular location is the plastid. The protein localises to the chloroplast. Functionally, one of the primary rRNA binding proteins, it binds directly to 16S rRNA where it nucleates assembly of the body of the 30S subunit. With S5 and S12 plays an important role in translational accuracy. This Stipellula capensis (Cape rice grass) protein is Small ribosomal subunit protein uS4c (rps4).